The following is a 389-amino-acid chain: Zinc finger C2HC domain-containing protein 1C homolog (389 aa).

2 disordered regions span residues 16-44 and 84-115; these read MLPH…SQQS and SYPH…GPQS. Polar residues-rich tracts occupy residues 35–44 and 90–102; these read YEQGDSSQQS and GISQ…DSQG. Residues 211–266 are a coiled coil; it reads VQIRRLEAAGESLEEEIRRKQILLRGKLKKTEEELRRIQMQKEQAKENENRELQKI. 2 disordered regions span residues 301 to 320 and 343 to 389; these read REDE…QLSD and SELS…PQLG. Polar residues predominate over residues 307-317; the sequence is GRSQQNSSPFQ. A compositionally biased stretch (low complexity) spans 368–382; sequence SSLSMAPDSSGSSGS.

This sequence belongs to the ZC2HC1 family.

In Pongo abelii (Sumatran orangutan), this protein is Zinc finger C2HC domain-containing protein 1C homolog (ZC2HC1C).